A 234-amino-acid chain; its full sequence is Ribosome-inactivating protein lychnin (234 aa).

A disulfide bridge connects residues C32 and C115. Residue E170 is part of the active site.

Monomer.

The enzyme catalyses Endohydrolysis of the N-glycosidic bond at one specific adenosine on the 28S rRNA.. Functionally, ribosome-inactivating protein of type 1, inhibits protein synthesis in animal cells. Inhibits cell-free translation in rabbit reticulocyte lysate system with an IC(50) of 0.17 nM. This Silene chalcedonica (Maltese-cross) protein is Ribosome-inactivating protein lychnin.